The sequence spans 205 residues: Large ribosomal subunit protein bL25 (205 aa).

This sequence belongs to the bacterial ribosomal protein bL25 family. CTC subfamily. Part of the 50S ribosomal subunit; part of the 5S rRNA/L5/L18/L25 subcomplex. Contacts the 5S rRNA. Binds to the 5S rRNA independently of L5 and L18.

In terms of biological role, this is one of the proteins that binds to the 5S RNA in the ribosome where it forms part of the central protuberance. This chain is Large ribosomal subunit protein bL25, found in Bartonella bacilliformis (strain ATCC 35685 / KC583 / Herrer 020/F12,63).